The following is a 685-amino-acid chain: RING finger protein 145 (685 aa).

Transmembrane regions (helical) follow at residues 53–73, 77–97, 123–143, 151–171, 174–194, 225–245, 275–295, 316–336, 340–360, 384–404, 410–430, 460–480, and 482–502; these read YIALYLHYVGYILSLVLLTLP, LVQLYLYVLTALLLFAGHQLS, FTTALIGQVVVCTLCSCVMQT, AHLLPLVARLCLVPLETIVFI, FAMIFTGLEVLYFIASNLLVP, LVLPVLFMCFWLVLFALQIYT, YSLLGLVFTVSFVALGVLTLC, TEGITLLILAVQTGLIELQVI, FLLSIILFIVVASILQSMLEI, SLCLFLLVFPAYMAYMICQFF, LLIIISSSILTSLQVLGTLLI, LLEFLVAVCVVAYGVSETLFG, and WTVMGSTIILVHSYYNVWLRA. The RING-type; atypical zinc finger occupies 537 to 575; sequence CSICFQDMKSAVITPCSHFFHAACLKKWLYVQETCPLCH. The tract at residues 582-685 is disordered; that stretch reads LQPTSSPGTP…VSTSDVNCAS (104 aa). The segment covering 583–602 has biased composition (low complexity); that stretch reads QPTSSPGTPTQGTPAANQNP. Basic and acidic residues predominate over residues 620-631; sequence EGIRAEEMKTSA.

The protein resides in the membrane. The protein is RING finger protein 145 (rnf145) of Danio rerio (Zebrafish).